The primary structure comprises 2717 residues: Naringenin synthase (2717 aa).

The adenylation (A) domain stretch occupies residues 13 to 422; it reads HHAVESRDKV…VGRKKELIIR (410 aa). The 87-residue stretch at 531-617 folds into the Carrier 1 domain; the sequence is AAVEALVLAE…AVRDYLFNRL (87 aa). At S576 the chain carries O-(pantetheine 4'-phosphoryl)serine. The 429-residue stretch at 638-1066 folds into the Ketosynthase family 3 (KS3) domain; that stretch reads AEPIAIISMA…GTNAHIILEQ (429 aa). Active-site for beta-ketoacyl synthase activity residues include C810, H945, and H988. The Malonyl-CoA:ACP transacylase (MAT) domain maps to 1204 to 1462; the sequence is PIFSRAFKEA…GPSAVLSPHV (259 aa). The segment at 1549 to 1688 is N-terminal hotdog fold; sequence HGVLYRTTSI…GTLKLISLPP (140 aa). The PKS/mFAS DH domain maps to 1549-1847; the sequence is HGVLYRTTSI…LRAVQPPVVE (299 aa). A dehydratase (DH) domain region spans residues 1561-1842; it reads TNDIICAGFV…ISEVMLRAVQ (282 aa). Residue H1581 is the Proton acceptor; for dehydratase activity of the active site. Residues 1703–1847 are C-terminal hotdog fold; sequence NSEVDVSKAY…LRAVQPPVVE (145 aa). D1764 functions as the Proton donor; for dehydratase activity in the catalytic mechanism. In terms of domain architecture, Ketoreductase (KR) spans 2008–2186; that stretch reads GTVLITGGTG…AVSLAWGPWA (179 aa). Positions 2277–2354 constitute a Carrier 2 domain; the sequence is SRSDTLLGLV…ALVQYLLDRI (78 aa). The residue at position 2313 (S2313) is an O-(pantetheine 4'-phosphoryl)serine. Residues 2361-2373 show a composition bias toward acidic residues; it reads EIELDQDVAEEET. The tract at residues 2361–2412 is disordered; sequence EIELDQDVAEEETVSGTNGHQNGHQNGTQNGHSNGHANGASTNGDATDGIDP. Positions 2375 to 2396 are enriched in low complexity; it reads SGTNGHQNGHQNGTQNGHSNGH. Residues 2497–2711 form a thioester reductase (TE) domain region; the sequence is SLSVYSAVAA…AIAVEIEHWA (215 aa).

The protein in the N-terminal section; belongs to the NRP synthetase family. Pantetheine 4'-phosphate is required as a cofactor.

PKS-NRPS hybrid synthetase that, alone, is sufficient to produce naringenin chalcone, the direct precursor of naringenin, by using p-coumaric acid (p-CA) or p-hydroxybenzoic acid (p-HBA) with the involvement of malonyl-CoA molecules. The adenylation (A) domain activates p-CA or p-HBA as adenylates, which are transferred to the thiol group of the pantetheinyl residue of the T domain, and further transferred to the adjacent PKS portion of fnsA. Besides p-CA and p-HBA, the A domain is also able to activate other substrates such as cinnamic acid and salicyclic acid. Within the PKS portion of fnsA, p-CA and p-HBA act as starter units for respectively three or four malonyl-CoA molecules for elongation by the AT and KS domains of fnsA. Afterwards, naringenin chalcone is cyclized through Claisen condensation and thereby released either spontaneously or catalyzed by the TE domain. Finally, naringenin chalcone is converted to naringenin spontaneously or by a chalcone isomerase. This Pestalotiopsis fici (strain W106-1 / CGMCC3.15140) protein is Naringenin synthase.